The following is a 384-amino-acid chain: Alkanesulfonate monooxygenase (384 aa).

This sequence belongs to the SsuD family.

The catalysed reaction is an alkanesulfonate + FMNH2 + O2 = an aldehyde + FMN + sulfite + H2O + 2 H(+). Functionally, catalyzes the desulfonation of aliphatic sulfonates. The polypeptide is Alkanesulfonate monooxygenase (Burkholderia thailandensis (strain ATCC 700388 / DSM 13276 / CCUG 48851 / CIP 106301 / E264)).